Consider the following 624-residue polypeptide: LRR receptor kinase BAK1 (624 aa).

The first 25 residues, 1–25 (MAAPRWAVWAVLLLRLLVPAARVLA), serve as a signal peptide directing secretion. The Extracellular portion of the chain corresponds to 26–237 (NMEGDALHSL…QSPGSSSSTG (212 aa)). 4 LRR repeats span residues 91–115 (LKNL…LGNL), 117–139 (NLVS…LGNL), 140–163 (LKLR…LTAI), and 164–188 (TALQ…SFSL). Residues N103, N114, N127, N149, and N175 are each glycosylated (N-linked (GlcNAc...) asparagine). The disordered stretch occupies residues 205 to 236 (TTKPCPGAPPFSPPPPYNPPTPVQSPGSSSST). Residues 210-227 (PGAPPFSPPPPYNPPTPV) are compositionally biased toward pro residues. Residues 238 to 258 (AIAGGVAAGAALLFAIPAIGF) form a helical membrane-spanning segment. At 259–624 (AWYRRRKPQE…LHAVELSGPR (366 aa)) the chain is on the cytoplasmic side. The region spanning 301-588 (FSNKNILGRG…GLAERWEEWQ (288 aa)) is the Protein kinase domain. ATP is bound by residues 307–315 (LGRGGFGKV) and K329. The Proton acceptor role is filled by D428.

The protein belongs to the protein kinase superfamily. Ser/Thr protein kinase family. Forms homodimers. Interacts with BRI1. Interacts with REM4.1.

Its subcellular location is the cell membrane. The catalysed reaction is L-seryl-[protein] + ATP = O-phospho-L-seryl-[protein] + ADP + H(+). It catalyses the reaction L-threonyl-[protein] + ATP = O-phospho-L-threonyl-[protein] + ADP + H(+). Functionally, LRR receptor kinase involved in defense response. Does not seem to be required specifically for XA21-mediated immunity or basal resistance to Xanthomonas oryzae pv. oryzae (Xoo), or immunity to Magnaporthe oryzae. Involved in brassinosteroid (BR) signaling pathway. Acts as a coreceptor of BRI1. Forms at the plasma membrane a receptor complex with BRI1 which is activated in response to brassinolide. Phosphorylates BRI1. Required for normal plant growth and leaf development. Possesses kinase activity in vitro. This Oryza sativa subsp. indica (Rice) protein is LRR receptor kinase BAK1.